The chain runs to 133 residues: ATP synthase epsilon chain (133 aa).

Belongs to the ATPase epsilon chain family. As to quaternary structure, F-type ATPases have 2 components, CF(1) - the catalytic core - and CF(0) - the membrane proton channel. CF(1) has five subunits: alpha(3), beta(3), gamma(1), delta(1), epsilon(1). CF(0) has three main subunits: a, b and c.

It is found in the cell membrane. Produces ATP from ADP in the presence of a proton gradient across the membrane. The polypeptide is ATP synthase epsilon chain (atpC) (Mycoplasma genitalium (strain ATCC 33530 / DSM 19775 / NCTC 10195 / G37) (Mycoplasmoides genitalium)).